Consider the following 688-residue polypeptide: Glycine--tRNA ligase beta subunit (688 aa).

It belongs to the class-II aminoacyl-tRNA synthetase family. Tetramer of two alpha and two beta subunits.

It localises to the cytoplasm. It catalyses the reaction tRNA(Gly) + glycine + ATP = glycyl-tRNA(Gly) + AMP + diphosphate. The chain is Glycine--tRNA ligase beta subunit from Vibrio atlanticus (strain LGP32) (Vibrio splendidus (strain Mel32)).